Consider the following 136-residue polypeptide: Large ribosomal subunit protein uL16 (136 aa).

Belongs to the universal ribosomal protein uL16 family. As to quaternary structure, part of the 50S ribosomal subunit.

Binds 23S rRNA and is also seen to make contacts with the A and possibly P site tRNAs. This is Large ribosomal subunit protein uL16 from Pasteurella multocida (strain Pm70).